The primary structure comprises 199 residues: Dephospho-CoA kinase (199 aa).

Positions 3–199 (VIGLTGSIGM…AAAKMPRRRS (197 aa)) constitute a DPCK domain. 11-16 (GMGKST) contributes to the ATP binding site.

Belongs to the CoaE family.

The protein localises to the cytoplasm. The catalysed reaction is 3'-dephospho-CoA + ATP = ADP + CoA + H(+). Its pathway is cofactor biosynthesis; coenzyme A biosynthesis; CoA from (R)-pantothenate: step 5/5. Its function is as follows. Catalyzes the phosphorylation of the 3'-hydroxyl group of dephosphocoenzyme A to form coenzyme A. The sequence is that of Dephospho-CoA kinase from Nitrobacter winogradskyi (strain ATCC 25391 / DSM 10237 / CIP 104748 / NCIMB 11846 / Nb-255).